A 107-amino-acid polypeptide reads, in one-letter code: UPF0122 protein STH1464 (107 aa).

The protein belongs to the UPF0122 family.

Functionally, might take part in the signal recognition particle (SRP) pathway. This is inferred from the conservation of its genetic proximity to ftsY/ffh. May be a regulatory protein. The protein is UPF0122 protein STH1464 of Symbiobacterium thermophilum (strain DSM 24528 / JCM 14929 / IAM 14863 / T).